A 447-amino-acid chain; its full sequence is Tubulin beta-4 chain (447 aa).

Residues glutamine 11, glutamate 71, serine 140, glycine 144, threonine 145, glycine 146, asparagine 206, and asparagine 228 each contribute to the GTP site. A Mg(2+)-binding site is contributed by glutamate 71. Residues glutamine 428–alanine 447 are disordered. Residues threonine 431–alanine 447 are compositionally biased toward acidic residues.

This sequence belongs to the tubulin family. As to quaternary structure, dimer of alpha and beta chains. A typical microtubule is a hollow water-filled tube with an outer diameter of 25 nm and an inner diameter of 15 nM. Alpha-beta heterodimers associate head-to-tail to form protofilaments running lengthwise along the microtubule wall with the beta-tubulin subunit facing the microtubule plus end conferring a structural polarity. Microtubules usually have 13 protofilaments but different protofilament numbers can be found in some organisms and specialized cells. The cofactor is Mg(2+).

It is found in the cytoplasm. The protein localises to the cytoskeleton. Tubulin is the major constituent of microtubules, a cylinder consisting of laterally associated linear protofilaments composed of alpha- and beta-tubulin heterodimers. Microtubules grow by the addition of GTP-tubulin dimers to the microtubule end, where a stabilizing cap forms. Below the cap, tubulin dimers are in GDP-bound state, owing to GTPase activity of alpha-tubulin. In Zea mays (Maize), this protein is Tubulin beta-4 chain (TUBB4).